Reading from the N-terminus, the 268-residue chain is 4-diphosphocytidyl-2-C-methyl-D-erythritol kinase (268 aa).

The active site involves Lys10. 101 to 111 is an ATP binding site; the sequence is PTQAGLGGGST. The active site involves Asp143.

Belongs to the GHMP kinase family. IspE subfamily.

The catalysed reaction is 4-CDP-2-C-methyl-D-erythritol + ATP = 4-CDP-2-C-methyl-D-erythritol 2-phosphate + ADP + H(+). Its pathway is isoprenoid biosynthesis; isopentenyl diphosphate biosynthesis via DXP pathway; isopentenyl diphosphate from 1-deoxy-D-xylulose 5-phosphate: step 3/6. In terms of biological role, catalyzes the phosphorylation of the position 2 hydroxy group of 4-diphosphocytidyl-2C-methyl-D-erythritol. The chain is 4-diphosphocytidyl-2-C-methyl-D-erythritol kinase from Helicobacter pylori (strain ATCC 700392 / 26695) (Campylobacter pylori).